The following is a 383-amino-acid chain: Succinyl-diaminopimelate desuccinylase (383 aa).

His72 provides a ligand contact to Zn(2+). Residue Asp74 is part of the active site. Residue Asp105 participates in Zn(2+) binding. Catalysis depends on Glu137, which acts as the Proton acceptor. 3 residues coordinate Zn(2+): Glu138, Glu167, and His352.

Belongs to the peptidase M20A family. DapE subfamily. Homodimer. It depends on Zn(2+) as a cofactor. Requires Co(2+) as cofactor.

The enzyme catalyses N-succinyl-(2S,6S)-2,6-diaminopimelate + H2O = (2S,6S)-2,6-diaminopimelate + succinate. The protein operates within amino-acid biosynthesis; L-lysine biosynthesis via DAP pathway; LL-2,6-diaminopimelate from (S)-tetrahydrodipicolinate (succinylase route): step 3/3. Its function is as follows. Catalyzes the hydrolysis of N-succinyl-L,L-diaminopimelic acid (SDAP), forming succinate and LL-2,6-diaminopimelate (DAP), an intermediate involved in the bacterial biosynthesis of lysine and meso-diaminopimelic acid, an essential component of bacterial cell walls. In Ehrlichia ruminantium (strain Gardel), this protein is Succinyl-diaminopimelate desuccinylase.